The following is a 184-amino-acid chain: Elongation factor P (184 aa).

It belongs to the elongation factor P family.

The protein resides in the cytoplasm. The protein operates within protein biosynthesis; polypeptide chain elongation. Functionally, involved in peptide bond synthesis. Stimulates efficient translation and peptide-bond synthesis on native or reconstituted 70S ribosomes in vitro. Probably functions indirectly by altering the affinity of the ribosome for aminoacyl-tRNA, thus increasing their reactivity as acceptors for peptidyl transferase. The polypeptide is Elongation factor P (Mycoplasma mycoides subsp. mycoides SC (strain CCUG 32753 / NCTC 10114 / PG1)).